Consider the following 85-residue polypeptide: U4-theraphotoxin-Hhn1a (85 aa).

An N-terminal signal peptide occupies residues 1–22 (MKVTLIAILTCATVLVLHTTAA). The propeptide occupies 23-48 (EELEAESQLMEVGMPDTELAAVDEER). Cystine bridges form between Cys52/Cys66, Cys56/Cys77, and Cys71/Cys82.

The protein belongs to the neurotoxin 12 (Hwtx-2) family. 02 (Hwtx-2) subfamily. Monomer. In terms of tissue distribution, expressed by the venom gland.

It localises to the secreted. In terms of biological role, neurotoxin active on both insects and mammals. The polypeptide is U4-theraphotoxin-Hhn1a (Cyriopagopus hainanus (Chinese bird spider)).